The following is a 230-amino-acid chain: Ribose-5-phosphate isomerase A (230 aa).

Substrate is bound by residues 31 to 34 (TGST), 88 to 91 (DGSD), and 101 to 104 (KGGG). E110 acts as the Proton acceptor in catalysis. K128 is a substrate binding site.

This sequence belongs to the ribose 5-phosphate isomerase family. In terms of assembly, homodimer.

The enzyme catalyses aldehydo-D-ribose 5-phosphate = D-ribulose 5-phosphate. The protein operates within carbohydrate degradation; pentose phosphate pathway; D-ribose 5-phosphate from D-ribulose 5-phosphate (non-oxidative stage): step 1/1. Functionally, catalyzes the reversible conversion of ribose-5-phosphate to ribulose 5-phosphate. The sequence is that of Ribose-5-phosphate isomerase A from Lactobacillus acidophilus (strain ATCC 700396 / NCK56 / N2 / NCFM).